Here is a 281-residue protein sequence, read N- to C-terminus: Small ribosomal subunit protein uS3 (281 aa).

A KH type-2 domain is found at 38–106 (IRRLLSTGLE…QVQLNILEVK (69 aa)). Residues 218 to 281 (APAGAERARR…VTHEPQIAES (64 aa)) form a disordered region. Low complexity predominate over residues 238–252 (SGAAGTTVTGTDAGR).

The protein belongs to the universal ribosomal protein uS3 family. In terms of assembly, part of the 30S ribosomal subunit. Forms a tight complex with proteins S10 and S14.

In terms of biological role, binds the lower part of the 30S subunit head. Binds mRNA in the 70S ribosome, positioning it for translation. This chain is Small ribosomal subunit protein uS3, found in Mycobacterium leprae (strain TN).